A 383-amino-acid polypeptide reads, in one-letter code: Queuine tRNA-ribosyltransferase (383 aa).

Aspartate 95 acts as the Proton acceptor in catalysis. Residues 95-99 (DSGGF), aspartate 149, glutamine 195, and glycine 222 each bind substrate. The tract at residues 253–259 (GVGSPDS) is RNA binding. Catalysis depends on aspartate 272, which acts as the Nucleophile. The RNA binding; important for wobble base 34 recognition stretch occupies residues 277–281 (TRIAR). The Zn(2+) site is built by cysteine 310, cysteine 312, cysteine 315, and histidine 341.

The protein belongs to the queuine tRNA-ribosyltransferase family. In terms of assembly, homodimer. Within each dimer, one monomer is responsible for RNA recognition and catalysis, while the other monomer binds to the replacement base PreQ1. Zn(2+) serves as cofactor.

The catalysed reaction is 7-aminomethyl-7-carbaguanine + guanosine(34) in tRNA = 7-aminomethyl-7-carbaguanosine(34) in tRNA + guanine. It functions in the pathway tRNA modification; tRNA-queuosine biosynthesis. In terms of biological role, catalyzes the base-exchange of a guanine (G) residue with the queuine precursor 7-aminomethyl-7-deazaguanine (PreQ1) at position 34 (anticodon wobble position) in tRNAs with GU(N) anticodons (tRNA-Asp, -Asn, -His and -Tyr). Catalysis occurs through a double-displacement mechanism. The nucleophile active site attacks the C1' of nucleotide 34 to detach the guanine base from the RNA, forming a covalent enzyme-RNA intermediate. The proton acceptor active site deprotonates the incoming PreQ1, allowing a nucleophilic attack on the C1' of the ribose to form the product. After dissociation, two additional enzymatic reactions on the tRNA convert PreQ1 to queuine (Q), resulting in the hypermodified nucleoside queuosine (7-(((4,5-cis-dihydroxy-2-cyclopenten-1-yl)amino)methyl)-7-deazaguanosine). The polypeptide is Queuine tRNA-ribosyltransferase (Shouchella clausii (strain KSM-K16) (Alkalihalobacillus clausii)).